The following is a 215-amino-acid chain: Probable transaldolase (215 aa).

Residue Lys83 is the Schiff-base intermediate with substrate of the active site.

The protein belongs to the transaldolase family. Type 3B subfamily.

It is found in the cytoplasm. It carries out the reaction D-sedoheptulose 7-phosphate + D-glyceraldehyde 3-phosphate = D-erythrose 4-phosphate + beta-D-fructose 6-phosphate. It functions in the pathway carbohydrate degradation; pentose phosphate pathway; D-glyceraldehyde 3-phosphate and beta-D-fructose 6-phosphate from D-ribose 5-phosphate and D-xylulose 5-phosphate (non-oxidative stage): step 2/3. Its function is as follows. Transaldolase is important for the balance of metabolites in the pentose-phosphate pathway. The polypeptide is Probable transaldolase (Methanococcus vannielii (strain ATCC 35089 / DSM 1224 / JCM 13029 / OCM 148 / SB)).